A 337-amino-acid chain; its full sequence is B3 domain-containing protein REM16 (337 aa).

DNA-binding regions (TF-B3) lie at residues Thr22–Gln116 and Phe223–Glu321.

It is found in the nucleus. This chain is B3 domain-containing protein REM16 (REM16), found in Arabidopsis thaliana (Mouse-ear cress).